The following is a 273-amino-acid chain: Patr class II histocompatibility antigen, DO beta chain (273 aa).

The N-terminal stretch at 1 to 26 (MGSGWVPWVVALLVNLTRLDSSMTQG) is a signal peptide. Positions 27–120 (TDSPEDFVIQ…LGAPFTVGRK (94 aa)) are beta-1. The Extracellular portion of the chain corresponds to 27–224 (TDSPEDFVIQ…RAQSEYSWKK (198 aa)). Intrachain disulfides connect C41–C105 and C143–C199. N-linked (GlcNAc...) asparagine glycosylation is present at N45. The beta-2 stretch occupies residues 121-214 (VQPEVTVYPE…SLLSPVSVEW (94 aa)). The Ig-like C1-type domain maps to 123-213 (PEVTVYPERT…SSLLSPVSVE (91 aa)). The segment at 215-224 (RAQSEYSWKK) is connecting peptide. A helical transmembrane segment spans residues 225–245 (MLSGIAAFLLGLIFLLVGIVI). Residues 246–273 (QLRAQKGYVRTQMSGNEVSRAVLLPQSC) are Cytoplasmic-facing.

It belongs to the MHC class II family. In terms of assembly, heterodimer of an alpha chain (DOA) and a beta chain (DOB). Forms a heterotetrameric complex with an HLA-DM molecule during intracellular transport in endosomal/lysosomal compartments in B-cells.

It localises to the endosome membrane. The protein resides in the lysosome membrane. Functionally, important modulator in the HLA class II restricted antigen presentation pathway by interaction with the HLA-DM molecule in B-cells. Modifies peptide exchange activity of HLA-DM. This Pan troglodytes (Chimpanzee) protein is Patr class II histocompatibility antigen, DO beta chain (Patr-DOB).